The sequence spans 71 residues: EEAMPSAWPCCDECGTCTRMIPPRCTCMDVSPSGCHPACKNCVQTTLGGRDVFWCMLRIENFCKRRCTPAR.

6 disulfides stabilise this stretch: Cys10/Cys67, Cys11/Cys27, Cys14/Cys63, Cys17/Cys25, Cys35/Cys42, and Cys39/Cys55.

It belongs to the Bowman-Birk serine protease inhibitor family.

In terms of biological role, inhibits trypsin but not chymotrypsin. In Triticum aestivum (Wheat), this protein is Bowman-Birk type trypsin inhibitor.